We begin with the raw amino-acid sequence, 152 residues long: Endoribonuclease YbeY (152 aa).

Residues His114, His118, and His124 each contribute to the Zn(2+) site.

This sequence belongs to the endoribonuclease YbeY family. Zn(2+) serves as cofactor.

Its subcellular location is the cytoplasm. Functionally, single strand-specific metallo-endoribonuclease involved in late-stage 70S ribosome quality control and in maturation of the 3' terminus of the 16S rRNA. The protein is Endoribonuclease YbeY of Wigglesworthia glossinidia brevipalpis.